We begin with the raw amino-acid sequence, 508 residues long: MPLEPSVRVVRELTSRGYNADREAVTLLAGADDPGAAVERAVAAAAADAATLTVSDVRAVLDAHTASSAAQTSAPASTPPDEATTHTDPSATDTPPNHDGGRAATADARSVEIDGDMTGASTGTGEYQDFVSVFRDRYDRLAAQLRGRVNHRPTSALASMPGGSDAAIVGMVNDIRSTTSGHWRVELEDTNGVFPVLVLKDRDVSDLVDDLLLDEVIAVSGTLADDGTILFADDIYFPEVPRTYSPSTADRSVQAALISDVHVGSQEFAADAWRSFADWLHTPAAESVEYLLIAGDMVEGVGVYPGQDEELDIVDIYDQYETFAEHLKDVPGDMEIVMIPGNHDAVRLAEPQPAFDEELRSIMRAHDARITSNPSTVTIDGVSVLLYHGVSLDEVIAEHPSDDVTYDDPQNAMELLLKKRHVAPPFGGRTRLAPEAEDHLAIDTVPDVFHTGHVHKLGVGIHHNVRLVNSGCWQHQTAFQESVNISPDVATAPILDLDTLDITVHKFS.

Over residues alanine 66–proline 80 the composition is skewed to low complexity. The tract at residues alanine 66–threonine 122 is disordered. The segment covering histidine 86–proline 95 has biased composition (polar residues).

It belongs to the DNA polymerase delta/II small subunit family. In terms of assembly, heterodimer of a large subunit and a small subunit.

The catalysed reaction is DNA(n) + a 2'-deoxyribonucleoside 5'-triphosphate = DNA(n+1) + diphosphate. The enzyme catalyses Exonucleolytic cleavage in the 3'- to 5'-direction to yield nucleoside 5'-phosphates.. Possesses two activities: a DNA synthesis (polymerase) and an exonucleolytic activity that degrades single-stranded DNA in the 3' to 5' direction. Has a template-primer preference which is characteristic of a replicative DNA polymerase. The protein is DNA polymerase II small subunit of Halobacterium salinarum (strain ATCC 29341 / DSM 671 / R1).